A 206-amino-acid chain; its full sequence is Thymidylate kinase (206 aa).

11–18 is a binding site for ATP; that stretch reads GIDGAGKT.

This sequence belongs to the thymidylate kinase family.

The catalysed reaction is dTMP + ATP = dTDP + ADP. Phosphorylation of dTMP to form dTDP in both de novo and salvage pathways of dTTP synthesis. This Burkholderia cenocepacia (strain ATCC BAA-245 / DSM 16553 / LMG 16656 / NCTC 13227 / J2315 / CF5610) (Burkholderia cepacia (strain J2315)) protein is Thymidylate kinase.